The primary structure comprises 217 residues: Phosphatidylcholine synthase (217 aa).

A helical membrane pass occupies residues 1–8 (ACIGVFSL). Topologically, residues 9–16 (VKIYQHEY) are periplasmic. A helical membrane pass occupies residues 17 to 37 (IFALWLMFITVVIDAVDGTLA). Over 38–50 (RLVNIKKILPKID) the chain is Cytoplasmic. A helical membrane pass occupies residues 51–71 (GALLDNIVDYLNYVITPCFFL). Topologically, residues 72-77 (LVKPGM) are periplasmic. The chain crosses the membrane as a helical span at residues 78–98 (LPPEYSVFLIAAVSITSAYQF). The Cytoplasmic portion of the chain corresponds to 99–107 (CQCDAKTPD). The helical transmembrane segment at 108 to 128 (HFFKGFPCYWNITILYMFIFN) threads the bilayer. Position 129 (threonine 129) is a topological domain, periplasmic. The chain crosses the membrane as a helical span at residues 130 to 149 (SAATNAIILIILSILIFVPV). Residues 150-164 (KYVYPSRLDYLTESR) lie on the Cytoplasmic side of the membrane. Residues 165 to 185 (ILKILMHICSIIYAVSSICIL) form a helical membrane-spanning segment. The Periplasmic portion of the chain corresponds to 186–191 (ISYPNT). A helical transmembrane segment spans residues 192-212 (NIICLSLSVAYVGMYLFLSFY). The Cytoplasmic portion of the chain corresponds to 213-217 (RTYYP).

The protein belongs to the CDP-alcohol phosphatidyltransferase class-I family. Requires Mn(2+) as cofactor.

The protein localises to the cell inner membrane. It catalyses the reaction a CDP-1,2-diacyl-sn-glycerol + choline = a 1,2-diacyl-sn-glycero-3-phosphocholine + CMP + H(+). In terms of biological role, condenses choline with CDP-diglyceride to produce phosphatidylcholine and CMP. The polypeptide is Phosphatidylcholine synthase (Legionella bozemanae (Fluoribacter bozemanae)).